Reading from the N-terminus, the 239-residue chain is Carboxy-S-adenosyl-L-methionine synthase (239 aa).

S-adenosyl-L-methionine-binding positions include Tyr-36, 61–63, 111–112, Asn-126, and Arg-193; these read GCS and DI.

It belongs to the class I-like SAM-binding methyltransferase superfamily. Cx-SAM synthase family. As to quaternary structure, homodimer.

It catalyses the reaction prephenate + S-adenosyl-L-methionine = carboxy-S-adenosyl-L-methionine + 3-phenylpyruvate + H2O. Its function is as follows. Catalyzes the conversion of S-adenosyl-L-methionine (SAM) to carboxy-S-adenosyl-L-methionine (Cx-SAM). This is Carboxy-S-adenosyl-L-methionine synthase from Nitratiruptor sp. (strain SB155-2).